The sequence spans 96 residues: UPF0184 protein CG14818 (96 aa).

2 disordered regions span residues methionine 1–methionine 28 and isoleucine 70–lysine 96. The segment covering aspartate 8–glutamine 21 has biased composition (polar residues). Residues glutamine 21–alanine 77 are a coiled coil. Over residues glutamate 72–methionine 85 the composition is skewed to acidic residues.

Belongs to the UPF0184 (EST00098) family.

The polypeptide is UPF0184 protein CG14818 (Drosophila melanogaster (Fruit fly)).